The sequence spans 398 residues: GPI mannosyltransferase 1 (398 aa).

9 consecutive transmembrane segments (helical) span residues 4–24 (LKYL…FGLY), 79–99 (WYHF…LIIL), 114–136 (MILS…GSAE), 156–176 (VILS…PIIY), 209–229 (IIIT…KYGW), 271–291 (IEKI…PLIF), 305–325 (FVFV…FLIF), 341–361 (ITGI…LYFA), and 375–395 (GLMY…MKFI).

Belongs to the PIGM family.

The protein localises to the endoplasmic reticulum membrane. It functions in the pathway glycolipid biosynthesis; glycosylphosphatidylinositol-anchor biosynthesis. Its function is as follows. Mannosyltransferase involved in glycosylphosphatidylinositol-anchor biosynthesis. Transfers the first alpha-1,4-mannose to GlcN-acyl-PI during GPI precursor assembly. Required for cell wall integrity. The chain is GPI mannosyltransferase 1 (GPI14) from Candida albicans (strain SC5314 / ATCC MYA-2876) (Yeast).